The sequence spans 404 residues: Trigger factor (404 aa).

A PPIase FKBP-type domain is found at 160 to 225 (KDHLFVRTEE…VLEVKTLKLP (66 aa)).

Belongs to the FKBP-type PPIase family. Tig subfamily.

Its subcellular location is the cytoplasm. The enzyme catalyses [protein]-peptidylproline (omega=180) = [protein]-peptidylproline (omega=0). Functionally, involved in protein export. Acts as a chaperone by maintaining the newly synthesized protein in an open conformation. Functions as a peptidyl-prolyl cis-trans isomerase. The protein is Trigger factor of Thermus thermophilus (strain ATCC 27634 / DSM 579 / HB8).